The primary structure comprises 250 residues: MSVTMREMLEAGVHFGHQTRFWNPKMAPFIFGHRNKIHIINLEKSLPMFQEAQKFAKQLAANRGTILMVGTKRQARELVAEQAQRAGVPYVDQRWLGGMLTNFKTVKTSIKRLKDMKAQQEAGLESMSKKEQLMFSRELEKLEKDIGGIQDMAALPDAIFVIDVGYHKIAVSEAKKLGIPLIGVVDSNHSPEGIDYVIPGNDDSAKAVALYARGIADAILDGRANAVTEVAKAVAAEGSDEFVEVDENAA.

This sequence belongs to the universal ribosomal protein uS2 family.

The sequence is that of Small ribosomal subunit protein uS2 from Acidovorax ebreus (strain TPSY) (Diaphorobacter sp. (strain TPSY)).